The sequence spans 201 residues: Regulator of G-protein signaling 1 (201 aa).

Positions 75–191 (SLEKLLVSEE…LKSEIFFRLA (117 aa)) constitute an RGS domain.

The protein localises to the cell membrane. The protein resides in the cytoplasm. It is found in the cytosol. Its function is as follows. Regulates G protein-coupled receptor signaling cascades, including signaling downstream of the N-formylpeptide chemoattractant receptors and leukotriene receptors. Inhibits B cell chemotaxis. Inhibits signal transduction by increasing the GTPase activity of G protein alpha subunits, thereby driving them into their inactive GDP-bound form. This chain is Regulator of G-protein signaling 1 (rgs1), found in Xenopus laevis (African clawed frog).